A 182-amino-acid chain; its full sequence is Phospholipase A2 inhibitor gamma subunit A2 (182 aa).

8 disulfides stabilise this stretch: cysteine 3/cysteine 27, cysteine 6/cysteine 13, cysteine 20/cysteine 48, cysteine 54/cysteine 75, cysteine 76/cysteine 81, cysteine 99/cysteine 124, cysteine 117/cysteine 146, and cysteine 150/cysteine 172. An N-linked (GlcNAc...) asparagine glycan is attached at asparagine 157.

The protein belongs to the CNF-like-inhibitor family. In terms of assembly, heterodimer of subunit A and subunit B.

It is found in the secreted. Phospholipase A2 (PA2) inhibitor. Inhibits the enzymatic activity of PA2 of Deinagkistrodon acutus. Also shows a wide anti-hemorrhage activities to D.acutus, Naja atra and Agkistrodon halys venom. The native protein is more potent than the recombinant one. The sequence is that of Phospholipase A2 inhibitor gamma subunit A2 from Trimerodytes annularis (Red-bellied annulate keelback).